Consider the following 285-residue polypeptide: Bifunctional protein FolD (285 aa).

Residues 165 to 167 and Ser-190 contribute to the NADP(+) site; that span reads GRS.

Belongs to the tetrahydrofolate dehydrogenase/cyclohydrolase family. As to quaternary structure, homodimer.

It carries out the reaction (6R)-5,10-methylene-5,6,7,8-tetrahydrofolate + NADP(+) = (6R)-5,10-methenyltetrahydrofolate + NADPH. The enzyme catalyses (6R)-5,10-methenyltetrahydrofolate + H2O = (6R)-10-formyltetrahydrofolate + H(+). Its pathway is one-carbon metabolism; tetrahydrofolate interconversion. Its function is as follows. Catalyzes the oxidation of 5,10-methylenetetrahydrofolate to 5,10-methenyltetrahydrofolate and then the hydrolysis of 5,10-methenyltetrahydrofolate to 10-formyltetrahydrofolate. The protein is Bifunctional protein FolD of Streptococcus pneumoniae serotype 4 (strain ATCC BAA-334 / TIGR4).